We begin with the raw amino-acid sequence, 232 residues long: A-type ATP synthase subunit D (232 aa).

It belongs to the V-ATPase D subunit family. As to quaternary structure, has multiple subunits with at least A(3), B(3), C, D, E, F, H, I and proteolipid K(x).

It is found in the cell membrane. Functionally, component of the A-type ATP synthase that produces ATP from ADP in the presence of a proton gradient across the membrane. In Methanopyrus kandleri (strain AV19 / DSM 6324 / JCM 9639 / NBRC 100938), this protein is A-type ATP synthase subunit D.